Here is a 1399-residue protein sequence, read N- to C-terminus: DNA-directed RNA polymerase subunit beta' (1399 aa).

Zn(2+) contacts are provided by cysteine 70, cysteine 72, cysteine 85, and cysteine 88. Mg(2+)-binding residues include aspartate 460, aspartate 462, and aspartate 464. 4 residues coordinate Zn(2+): cysteine 814, cysteine 888, cysteine 895, and cysteine 898.

It belongs to the RNA polymerase beta' chain family. As to quaternary structure, the RNAP catalytic core consists of 2 alpha, 1 beta, 1 beta' and 1 omega subunit. When a sigma factor is associated with the core the holoenzyme is formed, which can initiate transcription. Requires Mg(2+) as cofactor. Zn(2+) is required as a cofactor.

It catalyses the reaction RNA(n) + a ribonucleoside 5'-triphosphate = RNA(n+1) + diphosphate. Functionally, DNA-dependent RNA polymerase catalyzes the transcription of DNA into RNA using the four ribonucleoside triphosphates as substrates. This Ectopseudomonas mendocina (strain ymp) (Pseudomonas mendocina) protein is DNA-directed RNA polymerase subunit beta'.